The following is a 165-amino-acid chain: NAD(P)H-quinone oxidoreductase subunit I, chloroplastic (165 aa).

4Fe-4S ferredoxin-type domains are found at residues 55–84 and 95–124; these read GRIHFEFDKCIACEVCVRVCPINLPVVDWE and KSYSIDFGVCIFCGNCVEYCPTNCLSMTEE. [4Fe-4S] cluster-binding residues include C64, C67, C70, C74, C104, C107, C110, and C114.

This sequence belongs to the complex I 23 kDa subunit family. As to quaternary structure, NDH is composed of at least 16 different subunits, 5 of which are encoded in the nucleus. Requires [4Fe-4S] cluster as cofactor.

Its subcellular location is the plastid. The protein resides in the chloroplast thylakoid membrane. The catalysed reaction is a plastoquinone + NADH + (n+1) H(+)(in) = a plastoquinol + NAD(+) + n H(+)(out). The enzyme catalyses a plastoquinone + NADPH + (n+1) H(+)(in) = a plastoquinol + NADP(+) + n H(+)(out). NDH shuttles electrons from NAD(P)H:plastoquinone, via FMN and iron-sulfur (Fe-S) centers, to quinones in the photosynthetic chain and possibly in a chloroplast respiratory chain. The immediate electron acceptor for the enzyme in this species is believed to be plastoquinone. Couples the redox reaction to proton translocation, and thus conserves the redox energy in a proton gradient. This Psilotum nudum (Whisk fern) protein is NAD(P)H-quinone oxidoreductase subunit I, chloroplastic.